Here is an 87-residue protein sequence, read N- to C-terminus: Small ribosomal subunit protein uS15c (87 aa).

The protein belongs to the universal ribosomal protein uS15 family. As to quaternary structure, part of the 30S ribosomal subunit.

Its subcellular location is the plastid. The protein localises to the chloroplast. The polypeptide is Small ribosomal subunit protein uS15c (rps15) (Nicotiana tabacum (Common tobacco)).